Reading from the N-terminus, the 272-residue chain is N-acetylmuramoyl-L-alanine amidase CwlA (272 aa).

Positions 24–142 (KAEYITIHNT…QDWNGKYCPH (119 aa)) constitute an N-acetylmuramoyl-L-alanine amidase domain.

It belongs to the N-acetylmuramoyl-L-alanine amidase 2 family.

The catalysed reaction is Hydrolyzes the link between N-acetylmuramoyl residues and L-amino acid residues in certain cell-wall glycopeptides.. Functionally, autolysins are involved in some important biological processes such as cell separation, cell-wall turnover, competence for genetic transformation, formation of the flagella and sporulation. This chain is N-acetylmuramoyl-L-alanine amidase CwlA (cwlA), found in Bacillus subtilis (strain 168).